The chain runs to 741 residues: Interleukin-17 receptor D (741 aa).

The signal sequence occupies residues 1–26 (MAPGRELGAFLLALLAFCGGRRLAEA). Topologically, residues 27-301 (AGGPGGRRGA…VHSPWAGPIR (275 aa)) are extracellular. N-linked (GlcNAc...) asparagine glycosylation is found at Asn57, Asn82, Asn173, Asn208, and Asn279. The helical transmembrane segment at 302-322 (AIAITVPLVVISAFATLFTVM) threads the bilayer. The Cytoplasmic portion of the chain corresponds to 323–741 (CRKKQQENIY…TDELQAIAPL (419 aa)). Residues 357 to 510 (RPKVFICYSS…LMDNLPQLYS (154 aa)) form the SEFIR domain. The segment covering 688 to 703 (TETSSITGSVSSSSGL) has biased composition (low complexity). The disordered stretch occupies residues 688-708 (TETSSITGSVSSSSGLGEEEP).

It is found in the membrane. In terms of biological role, feedback inhibitor of fibroblast growth factor mediated Ras-MAPK signaling and ERK activation. May inhibit FGF-induced FGFR1 tyrosine phosphorylation. Inhibits TGFB-induced epithelial-to-mesenchymal transition in lens epithelial cells. In Gallus gallus (Chicken), this protein is Interleukin-17 receptor D (IL17RD).